The sequence spans 284 residues: Bifunctional protein FolD (284 aa).

NADP(+) is bound by residues 165 to 167 (GRS), Ser190, and Ile231.

Belongs to the tetrahydrofolate dehydrogenase/cyclohydrolase family. Homodimer.

It catalyses the reaction (6R)-5,10-methylene-5,6,7,8-tetrahydrofolate + NADP(+) = (6R)-5,10-methenyltetrahydrofolate + NADPH. It carries out the reaction (6R)-5,10-methenyltetrahydrofolate + H2O = (6R)-10-formyltetrahydrofolate + H(+). It participates in one-carbon metabolism; tetrahydrofolate interconversion. In terms of biological role, catalyzes the oxidation of 5,10-methylenetetrahydrofolate to 5,10-methenyltetrahydrofolate and then the hydrolysis of 5,10-methenyltetrahydrofolate to 10-formyltetrahydrofolate. The chain is Bifunctional protein FolD from Lysinibacillus sphaericus (strain C3-41).